The primary structure comprises 103 residues: MQQQKIRIRLKAFDYRLIDQSAAEIVDTAKRTGAIVRGPVPLPTRIQRFDILRSPHVNKTSRDQLEIRTHQRLMDIVDPTDKTVDALMKLDLPAGVDVEIKLQ.

The protein belongs to the universal ribosomal protein uS10 family. As to quaternary structure, part of the 30S ribosomal subunit.

Involved in the binding of tRNA to the ribosomes. The chain is Small ribosomal subunit protein uS10 from Burkholderia mallei (strain NCTC 10247).